The following is a 119-amino-acid chain: Putative yippee-like protein Os10g0369500 (119 aa).

Positions 21–118 (AVLKCRRCRV…LEKARMWKEA (98 aa)) constitute a Yippee domain. Zn(2+) is bound by residues C25, C28, C81, and C84.

It belongs to the yippee family.

This chain is Putative yippee-like protein Os10g0369500, found in Oryza sativa subsp. japonica (Rice).